Here is a 101-residue protein sequence, read N- to C-terminus: Protein S100-A4 (101 aa).

An N-acetylalanine modification is found at Ala2. 2 consecutive EF-hand domains span residues 12–47 (IVSTFHKYSGNEGDKFKLNKTELKELLTRELPSFLG) and 50–85 (TDEAAFQKLMNNLDSNRDNEVDFQEYCVFLSCIAMM). Residues Lys28 and Glu33 each coordinate Ca(2+). Residue Lys35 is modified to N6-acetyllysine. Positions 63, 65, 67, 69, and 74 each coordinate Ca(2+).

This sequence belongs to the S-100 family. As to quaternary structure, homodimer. Interacts with PPFIBP1 in a calcium-dependent mode. Interacts with PGLYRP1; this complex acts as a chemoattractant that promotes lymphocyte movement. Interacts with MYH9; this interaction increases cell motility. Interacts with Annexin 2/ANXA2. Interacts with TP53; this interaction promotes TP53 degradation. Interacts with CCR5 and CXCR3. Interacts with FCGR3A; this interaction inhibits PKC-dependent phosphorylation of FCGR3A.

Its subcellular location is the secreted. It localises to the nucleus. The protein localises to the cytoplasm. Functionally, calcium-binding protein that plays a role in various cellular processes including motility, angiogenesis, cell differentiation, apoptosis, and autophagy. Increases cell motility and invasiveness by interacting with non-muscle myosin heavy chain (NMMHC) IIA/MYH9. Mechanistically, promotes filament depolymerization and increases the amount of soluble myosin-IIA, resulting in the formation of stable protrusions facilitating chemotaxis. Also modulates the pro-apoptotic function of TP53 by binding to its C-terminal transactivation domain within the nucleus and reducing its protein levels. Within the extracellular space, stimulates cytokine production including granulocyte colony-stimulating factor and CCL24 from T-lymphocytes. In addition, stimulates T-lymphocyte chemotaxis by acting as a chemoattractant complex with PGLYRP1 that promotes lymphocyte migration via CCR5 and CXCR3 receptors. The sequence is that of Protein S100-A4 (S100a4) from Rattus norvegicus (Rat).